The primary structure comprises 256 residues: Imidazole glycerol phosphate synthase subunit HisF (256 aa).

Active-site residues include aspartate 12 and aspartate 131.

The protein belongs to the HisA/HisF family. Heterodimer of HisH and HisF.

It localises to the cytoplasm. It catalyses the reaction 5-[(5-phospho-1-deoxy-D-ribulos-1-ylimino)methylamino]-1-(5-phospho-beta-D-ribosyl)imidazole-4-carboxamide + L-glutamine = D-erythro-1-(imidazol-4-yl)glycerol 3-phosphate + 5-amino-1-(5-phospho-beta-D-ribosyl)imidazole-4-carboxamide + L-glutamate + H(+). The protein operates within amino-acid biosynthesis; L-histidine biosynthesis; L-histidine from 5-phospho-alpha-D-ribose 1-diphosphate: step 5/9. Its function is as follows. IGPS catalyzes the conversion of PRFAR and glutamine to IGP, AICAR and glutamate. The HisF subunit catalyzes the cyclization activity that produces IGP and AICAR from PRFAR using the ammonia provided by the HisH subunit. The protein is Imidazole glycerol phosphate synthase subunit HisF of Pseudomonas syringae pv. tomato (strain ATCC BAA-871 / DC3000).